Here is a 253-residue protein sequence, read N- to C-terminus: 2,3-bisphosphoglycerate-dependent phosphoglycerate mutase (253 aa).

Substrate contacts are provided by residues 12 to 19 (RHGESEWN), 25 to 26 (TG), Arg64, 91 to 94 (ERHY), Lys102, and 118 to 119 (RR). His13 functions as the Tele-phosphohistidine intermediate in the catalytic mechanism. The active-site Proton donor/acceptor is the Glu91. The segment at 126–148 (PPLADGSEFSQSDDPRYASIPPE) is disordered. 187–188 (GN) lines the substrate pocket.

This sequence belongs to the phosphoglycerate mutase family. BPG-dependent PGAM subfamily.

It carries out the reaction (2R)-2-phosphoglycerate = (2R)-3-phosphoglycerate. Its pathway is carbohydrate degradation; glycolysis; pyruvate from D-glyceraldehyde 3-phosphate: step 3/5. Functionally, catalyzes the interconversion of 2-phosphoglycerate and 3-phosphoglycerate. This is 2,3-bisphosphoglycerate-dependent phosphoglycerate mutase from Streptomyces avermitilis (strain ATCC 31267 / DSM 46492 / JCM 5070 / NBRC 14893 / NCIMB 12804 / NRRL 8165 / MA-4680).